We begin with the raw amino-acid sequence, 338 residues long: Formimidoylglutamase (338 aa).

H137, D166, H168, D170, C259, and D261 together coordinate Mn(2+).

It belongs to the arginase family. Mn(2+) serves as cofactor.

It carries out the reaction N-formimidoyl-L-glutamate + H2O = formamide + L-glutamate. Its pathway is amino-acid degradation; L-histidine degradation into L-glutamate; L-glutamate from N-formimidoyl-L-glutamate (hydrolase route): step 1/1. In terms of biological role, catalyzes the conversion of N-formimidoyl-L-glutamate to L-glutamate and formamide. This chain is Formimidoylglutamase, found in Clostridium tetani (strain Massachusetts / E88).